We begin with the raw amino-acid sequence, 275 residues long: Phosphonoacetaldehyde hydrolase (275 aa).

The active-site Nucleophile is the Asp-15. Residues Asp-15 and Ala-17 each contribute to the Mg(2+) site. Lys-56 serves as the catalytic Schiff-base intermediate with substrate. A Mg(2+)-binding site is contributed by Asp-189.

The protein belongs to the HAD-like hydrolase superfamily. PhnX family. As to quaternary structure, homodimer. Mg(2+) serves as cofactor.

It carries out the reaction phosphonoacetaldehyde + H2O = acetaldehyde + phosphate + H(+). Its activity is regulated as follows. Inhibited by phosphite, moderately inhibited by phosphonic acids, the corresponding aminophosphonic acids activate the enzyme. In terms of biological role, involved in phosphonate degradation. This Pseudomonas aeruginosa (strain ATCC 15692 / DSM 22644 / CIP 104116 / JCM 14847 / LMG 12228 / 1C / PRS 101 / PAO1) protein is Phosphonoacetaldehyde hydrolase.